The chain runs to 43 residues: Defensin (43 aa).

3 disulfides stabilise this stretch: Cys3-Cys34, Cys20-Cys39, and Cys24-Cys41.

Its subcellular location is the secreted. Functionally, antibacterial peptide active against Gram-positive and Gram-negative bacteria. This is Defensin from Palomena prasina (Green shield bug).